Here is a 798-residue protein sequence, read N- to C-terminus: Gelsolin (798 aa).

Residues 1–28 form the signal peptide; the sequence is MDASGAATMAVLSSLLVFLALSSSLCSA. The segment at 57–181 is actin-severing; the sequence is RVMHPSFANA…YEQGGVGTGF (125 aa). Residues 78–131 form a Gelsolin-like 1 repeat; sequence ENFEPVIYPKTNYGKFYTGDSFIVLNTIENKKDKKLSWDVHFWLGLETSTDEAG. Phosphotyrosine; by SRC is present on Tyr-90. An actin-actin interfilament contact point region spans residues 128-131; that stretch reads DEAG. Residues 167–174 and 193–201 each bind a 1,2-diacyl-sn-glycero-3-phospho-(1D-myo-inositol-4,5-bisphosphate); these read KNGIRYEQ and RLFQVKGKR. Gelsolin-like repeat units lie at residues 203-243, 322-365, 474-524, and 583-625; these read VRVR…VEKL, LKVD…KEKT, IVVS…AARK, and VHAS…FEKQ. The segment at 451–792 is actin-binding, Ca-sensitive; that stretch reads MPDHGQNVIE…SYEDMKQLVI (342 aa). Asp-599 provides a ligand contact to Ca(2+). The residue at position 612 (Tyr-612) is a Phosphotyrosine; by SRC. Glu-623 provides a ligand contact to Ca(2+). Tyr-662 bears the Phosphotyrosine; by SRC mark. A Gelsolin-like 6 repeat occupies 689–730; it reads LKVEEVAQYEQEDLDSDDIMLLDAGDEIYLWVGYGVSEEENG. Ca(2+) is bound by residues Asp-705, Asp-706, and Glu-728.

The protein belongs to the villin/gelsolin family. Binds to actin and to fibronectin. In terms of tissue distribution, isoform 1 and isoform 2 are ubiquitously expressed in early embryo. Isoform 1 is expressed in the fat body, and is abundant in hemolymph. Isoform 2 is expressed in parts of the gut.

The protein resides in the cytoplasm. The protein localises to the cytoskeleton. It localises to the secreted. Calcium-regulated, actin-modulating protein that binds to the plus (or barbed) ends of actin monomers or filaments, preventing monomer exchange (end-blocking or capping). It can promote the assembly of monomers into filaments (nucleation) as well as sever filaments already formed. The protein is Gelsolin (Gel) of Drosophila melanogaster (Fruit fly).